The following is a 259-amino-acid chain: Major cell-binding factor (259 aa).

An N-terminal signal peptide occupies residues 1–26 (MVFRKSLLKLAVFALGACVAFSNANA).

The protein belongs to the bacterial solute-binding protein 3 family.

It is found in the cell surface. Functionally, common antigen and a major cell adherence molecule. Most probably involved, with PEB1C, in a binding-protein-dependent transport system for an amino acid. May be involved in binding to intestinal cells. The chain is Major cell-binding factor (peb1A) from Campylobacter jejuni subsp. jejuni serotype O:2 (strain ATCC 700819 / NCTC 11168).